The sequence spans 162 residues: Cyanate hydratase (162 aa).

Active-site residues include R103, E106, and S129.

This sequence belongs to the cyanase family.

It carries out the reaction cyanate + hydrogencarbonate + 3 H(+) = NH4(+) + 2 CO2. Functionally, catalyzes the reaction of cyanate with bicarbonate to produce ammonia and carbon dioxide. The sequence is that of Cyanate hydratase from Phaeosphaeria nodorum (strain SN15 / ATCC MYA-4574 / FGSC 10173) (Glume blotch fungus).